A 460-amino-acid polypeptide reads, in one-letter code: Bifunctional protein GlmU (460 aa).

The interval 1–229 (MTNYAIILAA…FNESLGVNDR (229 aa)) is pyrophosphorylase. Residues 8 to 11 (LAAG), K22, Q72, and 77 to 78 (GT) each bind UDP-N-acetyl-alpha-D-glucosamine. Position 102 (D102) interacts with Mg(2+). Residues G139, E154, N169, and N227 each contribute to the UDP-N-acetyl-alpha-D-glucosamine site. Residue N227 coordinates Mg(2+). The segment at 230–250 (VALAIAETVMRQRITQKHMVN) is linker. Residues 251–460 (GVTFQNPETV…RLAHHPSRSK (210 aa)) are N-acetyltransferase. R332 and K350 together coordinate UDP-N-acetyl-alpha-D-glucosamine. H362 (proton acceptor) is an active-site residue. Residues Y365 and N376 each contribute to the UDP-N-acetyl-alpha-D-glucosamine site. Acetyl-CoA-binding positions include A379, 385 to 386 (NY), S404, A422, and R439.

It in the N-terminal section; belongs to the N-acetylglucosamine-1-phosphate uridyltransferase family. In the C-terminal section; belongs to the transferase hexapeptide repeat family. Homotrimer. It depends on Mg(2+) as a cofactor.

It localises to the cytoplasm. It catalyses the reaction alpha-D-glucosamine 1-phosphate + acetyl-CoA = N-acetyl-alpha-D-glucosamine 1-phosphate + CoA + H(+). It carries out the reaction N-acetyl-alpha-D-glucosamine 1-phosphate + UTP + H(+) = UDP-N-acetyl-alpha-D-glucosamine + diphosphate. It functions in the pathway nucleotide-sugar biosynthesis; UDP-N-acetyl-alpha-D-glucosamine biosynthesis; N-acetyl-alpha-D-glucosamine 1-phosphate from alpha-D-glucosamine 6-phosphate (route II): step 2/2. Its pathway is nucleotide-sugar biosynthesis; UDP-N-acetyl-alpha-D-glucosamine biosynthesis; UDP-N-acetyl-alpha-D-glucosamine from N-acetyl-alpha-D-glucosamine 1-phosphate: step 1/1. The protein operates within bacterial outer membrane biogenesis; LPS lipid A biosynthesis. Its function is as follows. Catalyzes the last two sequential reactions in the de novo biosynthetic pathway for UDP-N-acetylglucosamine (UDP-GlcNAc). The C-terminal domain catalyzes the transfer of acetyl group from acetyl coenzyme A to glucosamine-1-phosphate (GlcN-1-P) to produce N-acetylglucosamine-1-phosphate (GlcNAc-1-P), which is converted into UDP-GlcNAc by the transfer of uridine 5-monophosphate (from uridine 5-triphosphate), a reaction catalyzed by the N-terminal domain. This is Bifunctional protein GlmU from Streptococcus pyogenes serotype M1.